The chain runs to 142 residues: Large ribosomal subunit protein uL11 (142 aa).

It belongs to the universal ribosomal protein uL11 family. As to quaternary structure, part of the ribosomal stalk of the 50S ribosomal subunit. Interacts with L10 and the large rRNA to form the base of the stalk. L10 forms an elongated spine to which L12 dimers bind in a sequential fashion forming a multimeric L10(L12)X complex. One or more lysine residues are methylated.

Functionally, forms part of the ribosomal stalk which helps the ribosome interact with GTP-bound translation factors. This Haemophilus ducreyi (strain 35000HP / ATCC 700724) protein is Large ribosomal subunit protein uL11.